A 447-amino-acid chain; its full sequence is Tubulin beta chain (447 aa).

The GTP site is built by glutamine 11, glutamate 69, serine 138, glycine 142, threonine 143, glycine 144, asparagine 204, and asparagine 226. Glutamate 69 is a binding site for Mg(2+). Residues 424–447 (QYQEASVSEGEEEYDEEAPLEGEE) form a disordered region. Residues 432-447 (EGEEEYDEEAPLEGEE) are compositionally biased toward acidic residues.

The protein belongs to the tubulin family. As to quaternary structure, dimer of alpha and beta chains. A typical microtubule is a hollow water-filled tube with an outer diameter of 25 nm and an inner diameter of 15 nM. Alpha-beta heterodimers associate head-to-tail to form protofilaments running lengthwise along the microtubule wall with the beta-tubulin subunit facing the microtubule plus end conferring a structural polarity. Microtubules usually have 13 protofilaments but different protofilament numbers can be found in some organisms and specialized cells. Mg(2+) serves as cofactor.

It is found in the cytoplasm. The protein localises to the cytoskeleton. Tubulin is the major constituent of microtubules, a cylinder consisting of laterally associated linear protofilaments composed of alpha- and beta-tubulin heterodimers. Microtubules grow by the addition of GTP-tubulin dimers to the microtubule end, where a stabilizing cap forms. Below the cap, tubulin dimers are in GDP-bound state, owing to GTPase activity of alpha-tubulin. The polypeptide is Tubulin beta chain (Venturia inaequalis (Apple scab fungus)).